The primary structure comprises 330 residues: Protoheme IX farnesyltransferase (330 aa).

Transmembrane regions (helical) follow at residues 30–50 (LVKP…MWMA), 58–78 (FFIT…INMV), 106–126 (LIFS…FTNL), 127–147 (LAAG…THWL), 155–175 (IVIG…ATTG), 182–202 (WVMF…LAIL), 228–248 (ILLY…PLGM), 249–269 (LGSF…WKAV), and 281–301 (AASL…AMGL).

This sequence belongs to the UbiA prenyltransferase family. Protoheme IX farnesyltransferase subfamily.

It localises to the cell inner membrane. It catalyses the reaction heme b + (2E,6E)-farnesyl diphosphate + H2O = Fe(II)-heme o + diphosphate. It participates in porphyrin-containing compound metabolism; heme O biosynthesis; heme O from protoheme: step 1/1. Converts heme B (protoheme IX) to heme O by substitution of the vinyl group on carbon 2 of heme B porphyrin ring with a hydroxyethyl farnesyl side group. The polypeptide is Protoheme IX farnesyltransferase (Synechococcus sp. (strain JA-2-3B'a(2-13)) (Cyanobacteria bacterium Yellowstone B-Prime)).